We begin with the raw amino-acid sequence, 325 residues long: Lipid droplet-associated hydrolase (325 aa).

S139 functions as the Nucleophile in the catalytic mechanism. Active-site charge relay system residues include D271 and H300.

It belongs to the AB hydrolase superfamily. LDAH family.

It localises to the lipid droplet. Its subcellular location is the endoplasmic reticulum. The enzyme catalyses a cholesterol ester + H2O = cholesterol + a fatty acid + H(+). In terms of biological role, probable serine lipid hydrolase associated with lipid droplets. Has low cholesterol esterase activity. Appears to lack triglyceride lipase activity. Involved in cholesterol and triglyceride homeostasis; stimulates cellular triglyceride accumulation and cellular cholesterol release. Acts antagonistically with PNPLA2/ATGL in regulation of cellular lipid stores. May regulate triglyceride accumulation indirectly through stimulation of PNPLA2/ATGL ubiquitination and proteasomal degradation. Promotes microtubule-dependent lipid droplet fusion. Highly expressed in macrophage-rich areas in atherosclerotic lesions, suggesting that it could promote cholesterol ester turnover in macrophages. This Rattus norvegicus (Rat) protein is Lipid droplet-associated hydrolase.